A 513-amino-acid polypeptide reads, in one-letter code: MAAFLRCPLLARHPPLARAFATGARCPFMGFAHRAAPELQEDVERPQIPAVEVLEELLRDGGAALNRTVRDCMDEDAFPYEEQFQAQLGALRRTHTYRVVTAVGRRADAPPLGTRGTAPHTSVELWCSSDYLGLSRHPAVLRAARAALDAHGLGAGGTRNIGGTSPLHGALERALALLHRQPRAALFSSCFAANDTALDTLARILPGCQVYSDAGNHASMIQGIRRRGVPKFIFRHNDPHHLEQLLGRSPPGVPKIVAFESLHSMDGSIAPLEELCDVAHAYGALTFVDEVHAVGLYGARGAGIAERDGVQHKVDVVSGTLGKALGAVGGYIAGSEALVDAVRSLGPGFIFTTALPPQRGGGALAALQVVGSAEGAALRRAHQRHAKHLRVLLRDRGLPALPSHIVPVRWDAEANTRLSRALLEEHGLYVQAINHPTVPRGQELLLRIAPTPHHSPPMLENLADKLSECWGAVGLPREDPPGPSCSSCHRPLHLSLLSPLERDQFGVRGAAAG.

The transit peptide at 1–18 directs the protein to the mitochondrion; the sequence is MAAFLRCPLLARHPPLAR. Position 98 (R98) interacts with succinyl-CoA. Pyridoxal 5'-phosphate-binding residues include C190 and F191. Succinyl-CoA is bound by residues S212 and K231. Pyridoxal 5'-phosphate-binding residues include S264, H292, and T320. K323 is an active-site residue. K323 carries the post-translational modification N6-(pyridoxal phosphate)lysine. Positions 352 and 353 each coordinate pyridoxal 5'-phosphate. T437 lines the succinyl-CoA pocket.

This sequence belongs to the class-II pyridoxal-phosphate-dependent aminotransferase family. In terms of assembly, homodimer. Pyridoxal 5'-phosphate is required as a cofactor. As to expression, erythroid-specific.

Its subcellular location is the mitochondrion inner membrane. The catalysed reaction is succinyl-CoA + glycine + H(+) = 5-aminolevulinate + CO2 + CoA. The protein operates within porphyrin-containing compound metabolism; protoporphyrin-IX biosynthesis; 5-aminolevulinate from glycine: step 1/1. In terms of biological role, catalyzes the pyridoxal 5'-phosphate (PLP)-dependent condensation of succinyl-CoA and glycine to form aminolevulinic acid (ALA), with CoA and CO2 as by-products. Contributes significantly to heme formation during erythropoiesis. In Gallus gallus (Chicken), this protein is 5-aminolevulinate synthase, erythroid-specific, mitochondrial (ALAS2).